Reading from the N-terminus, the 1171-residue chain is Structural maintenance of chromosomes protein 2-2 (1171 aa).

A Zinc-hook domain is found at 2-1158 (HIKEICLEGF…DVLFRTKFVD (1157 aa)). 32 to 39 (GLNGSGKS) contacts ATP. Positions 172–510 (RMYENKKEAA…LANVQFTYRD (339 aa)) form a coiled coil. An SMC hinge domain is found at 518–635 (SKVKGVVAKL…KTTDAAKEVA (118 aa)). Positions 674-1026 (HDLAEAETKF…LDEKKKETLK (353 aa)) form a coiled coil.

Belongs to the SMC family. SMC2 subfamily. Forms a heterodimer with SMC4. Component of the condensin complex, which contains the SMC2 and SMC4 heterodimer, and three non SMC subunits that probably regulate the complex: CAPH, CAPD2 and CAPG. In terms of tissue distribution, highly expressed in roots and young floral buds.

The protein localises to the nucleus. Its function is as follows. Central component of the condensin complex, a complex required for conversion of interphase chromatin into mitotic-like condense chromosomes. The condensin complex probably introduces positive supercoils into relaxed DNA in the presence of type I topoisomerases and converts nicked DNA into positive knotted forms in the presence of type II topoisomerases. Also involved in chromosome segregation in meiosis. The sequence is that of Structural maintenance of chromosomes protein 2-2 (SMC2-2) from Arabidopsis thaliana (Mouse-ear cress).